Here is a 390-residue protein sequence, read N- to C-terminus: RNA polymerase sigma factor SigA (390 aa).

Positions 48 to 57 are enriched in acidic residues; the sequence is FLEPQTDEDD. The segment at 48–75 is disordered; that stretch reads FLEPQTDEDDAKSGKAAKSRRRTQSKKK. The segment covering 62 to 75 has biased composition (basic residues); the sequence is KAAKSRRRTQSKKK. Residues 158 to 228 are sigma-70 factor domain-2; the sequence is MVQSNLRLVV…TRAIADQSRT (71 aa). Positions 182–185 match the Interaction with polymerase core subunit RpoC motif; it reads DLIQ. Residues 237-312 form a sigma-70 factor domain-3 region; it reads ETISRIKKTT…ESDGETPEDQ (76 aa). The tract at residues 325–378 is sigma-70 factor domain-4; that stretch reads VLDSLSPRERDVLRLRYGLDDGRMKTLEEIGQIFNVTRERIRQIEAKALRKLRH. Positions 351 to 370 form a DNA-binding region, H-T-H motif; the sequence is LEEIGQIFNVTRERIRQIEA.

This sequence belongs to the sigma-70 factor family. RpoD/SigA subfamily. As to quaternary structure, interacts transiently with the RNA polymerase catalytic core.

The protein localises to the cytoplasm. Its function is as follows. Sigma factors are initiation factors that promote the attachment of RNA polymerase to specific initiation sites and are then released. This sigma factor is the primary sigma factor during exponential growth. This Nostoc sp. (strain PCC 7120 / SAG 25.82 / UTEX 2576) protein is RNA polymerase sigma factor SigA.